We begin with the raw amino-acid sequence, 234 residues long: 2-phospho-L-lactate guanylyltransferase (234 aa).

Belongs to the CofC family. As to quaternary structure, homodimer.

It carries out the reaction (2S)-2-phospholactate + GTP + H(+) = (2S)-lactyl-2-diphospho-5'-guanosine + diphosphate. It participates in cofactor biosynthesis; coenzyme F420 biosynthesis. In terms of biological role, guanylyltransferase that catalyzes the activation of (2S)-2-phospholactate (2-PL) as (2S)-lactyl-2-diphospho-5'-guanosine, via the condensation of 2-PL with GTP. It is involved in the biosynthesis of coenzyme F420, a hydride carrier cofactor. In Methanobrevibacter ruminantium (strain ATCC 35063 / DSM 1093 / JCM 13430 / OCM 146 / M1) (Methanobacterium ruminantium), this protein is 2-phospho-L-lactate guanylyltransferase.